We begin with the raw amino-acid sequence, 506 residues long: Chorion-specific transcription factor GCMb (506 aa).

The segment at residues 19-174 (LSWDINDPQM…KSETEARRSA (156 aa)) is a DNA-binding region (GCM). Zn(2+) is bound by residues Cys-81, Cys-87, Cys-91, Cys-118, Cys-121, Cys-130, His-157, and His-159. Positions 155–172 (GVHDHPRPESKSETEARR) are enriched in basic and acidic residues. The segment at 155–213 (GVHDHPRPESKSETEARRSAIKRQMASFYQPQKKRIRESEAEENQDSSGHFSNIPPLEN) is disordered. Residues 379 to 395 (LQTVITTTTKVSYQAYQ) are C-terminal conserved inhibitory domain (CCID).

It localises to the nucleus. Functionally, transcription factor that binds specific sequences on gene promoters and activate their transcription. Through the regulation of gene transcription, may play a role in parathyroid gland development. The protein is Chorion-specific transcription factor GCMb of Homo sapiens (Human).